The following is a 180-amino-acid chain: ATP-dependent protease subunit HslV (180 aa).

Residue Thr-5 is part of the active site. 3 residues coordinate Na(+): Gly-165, Cys-168, and Thr-171.

The protein belongs to the peptidase T1B family. HslV subfamily. As to quaternary structure, a double ring-shaped homohexamer of HslV is capped on each side by a ring-shaped HslU homohexamer. The assembly of the HslU/HslV complex is dependent on binding of ATP.

The protein localises to the cytoplasm. It catalyses the reaction ATP-dependent cleavage of peptide bonds with broad specificity.. Its activity is regulated as follows. Allosterically activated by HslU binding. Protease subunit of a proteasome-like degradation complex believed to be a general protein degrading machinery. The sequence is that of ATP-dependent protease subunit HslV from Helicobacter acinonychis (strain Sheeba).